A 542-amino-acid chain; its full sequence is Prolyl 3-hydroxylase OGFOD1 (542 aa).

Residues 134–239 (DLESTIDMSC…RLSISGWFHG (106 aa)) enclose the Fe2OG dioxygenase domain. Fe cation-binding residues include His155 and Asp157. Tyr169 serves as a coordination point for 2-oxoglutarate. His218 serves as a coordination point for Fe cation. Arg230 provides a ligand contact to 2-oxoglutarate. Positions 373 to 435 (EDEMNDKKEA…TKKESSVPTC (63 aa)) are disordered. Over residues 400-416 (ENNQTAISNNSQQSNEQ) the composition is skewed to polar residues.

The protein belongs to the TPA1 family. Monomer. The cofactor is Fe(2+). L-ascorbate serves as cofactor.

The protein localises to the cytoplasm. It is found in the nucleus. It carries out the reaction [ribosomal protein uS12]-L-proline + 2-oxoglutarate + O2 = [ribosomal protein uS12]-(3S)-3-hydroxy-L-proline + succinate + CO2. In terms of biological role, prolyl 3-hydroxylase that catalyzes 3-hydroxylation of 'Pro-62' of small ribosomal subunit uS12 (RPS23), thereby regulating protein translation termination efficiency. Involved in stress granule formation. The polypeptide is Prolyl 3-hydroxylase OGFOD1 (OGFOD1) (Pongo abelii (Sumatran orangutan)).